A 448-amino-acid polypeptide reads, in one-letter code: Adenylosuccinate synthetase (448 aa).

GTP contacts are provided by residues 36-42 (GDEGKGK) and 64-66 (GHT). The Proton acceptor role is filled by aspartate 37. Mg(2+) is bound by residues aspartate 37 and glycine 64. IMP-binding positions include 37 to 40 (DEGK), 62 to 65 (NAGH), threonine 154, arginine 168, asparagine 246, threonine 261, and arginine 325. The active-site Proton donor is the histidine 65. A substrate-binding site is contributed by 321 to 327 (VTTKRKR). GTP contacts are provided by residues arginine 327, 353 to 355 (KLD), and 436 to 438 (GVG).

The protein belongs to the adenylosuccinate synthetase family. In terms of assembly, homodimer. Requires Mg(2+) as cofactor.

Its subcellular location is the cytoplasm. It carries out the reaction IMP + L-aspartate + GTP = N(6)-(1,2-dicarboxyethyl)-AMP + GDP + phosphate + 2 H(+). The protein operates within purine metabolism; AMP biosynthesis via de novo pathway; AMP from IMP: step 1/2. Its function is as follows. Plays an important role in the de novo pathway and in the salvage pathway of purine nucleotide biosynthesis. Catalyzes the first committed step in the biosynthesis of AMP from IMP. The protein is Adenylosuccinate synthetase of Drosophila virilis (Fruit fly).